A 351-amino-acid chain; its full sequence is Minor outer capsid protein P9 (351 aa).

Residues 246-330 (GVPAALPQPD…EMDMPDGFHD (85 aa)) form a disordered region. The segment covering 285-298 (MIRKKVETSKDAPS) has biased composition (basic and acidic residues). Over residues 315–324 (LEDDMSEMDM) the composition is skewed to acidic residues.

This sequence belongs to the phytoreovirus minor outer capsid protein P9 family.

It localises to the virion. Its subcellular location is the host cytoplasm. Functionally, minor outer capsid protein. The polypeptide is Minor outer capsid protein P9 (Alopecurus aequalis (Barnyard grass)).